We begin with the raw amino-acid sequence, 122 residues long: Large ribosomal subunit protein uL14 (122 aa).

The protein belongs to the universal ribosomal protein uL14 family. In terms of assembly, part of the 50S ribosomal subunit. Forms a cluster with proteins L3 and L19. In the 70S ribosome, L14 and L19 interact and together make contacts with the 16S rRNA in bridges B5 and B8.

Functionally, binds to 23S rRNA. Forms part of two intersubunit bridges in the 70S ribosome. This Granulibacter bethesdensis (strain ATCC BAA-1260 / CGDNIH1) protein is Large ribosomal subunit protein uL14.